The sequence spans 477 residues: 3-isopropylmalate dehydratase large subunit 1 (477 aa).

3 residues coordinate [4Fe-4S] cluster: cysteine 357, cysteine 417, and cysteine 420.

It belongs to the aconitase/IPM isomerase family. LeuC type 1 subfamily. In terms of assembly, heterodimer of LeuC and LeuD. [4Fe-4S] cluster serves as cofactor.

The enzyme catalyses (2R,3S)-3-isopropylmalate = (2S)-2-isopropylmalate. The protein operates within amino-acid biosynthesis; L-leucine biosynthesis; L-leucine from 3-methyl-2-oxobutanoate: step 2/4. Functionally, catalyzes the isomerization between 2-isopropylmalate and 3-isopropylmalate, via the formation of 2-isopropylmaleate. This chain is 3-isopropylmalate dehydratase large subunit 1, found in Bradyrhizobium diazoefficiens (strain JCM 10833 / BCRC 13528 / IAM 13628 / NBRC 14792 / USDA 110).